The sequence spans 276 residues: Glucosamine-6-phosphate deaminase 2 (276 aa).

The Proton acceptor; for enolization step role is filled by aspartate 72. Residues isoleucine 106–glycine 130 are a coiled coil. The active-site For ring-opening step is aspartate 141. Histidine 143 acts as the Proton acceptor; for ring-opening step in catalysis. The active-site For ring-opening step is glutamate 148. A Phosphothreonine modification is found at threonine 161.

It belongs to the glucosamine/galactosamine-6-phosphate isomerase family. As to quaternary structure, homohexamer.

It localises to the cytoplasm. It catalyses the reaction alpha-D-glucosamine 6-phosphate + H2O = beta-D-fructose 6-phosphate + NH4(+). The protein operates within nucleotide-sugar biosynthesis; UDP-N-acetyl-alpha-D-glucosamine biosynthesis; alpha-D-glucosamine 6-phosphate from D-fructose 6-phosphate: step 1/1. With respect to regulation, allosterically activated by N-acetylglucosamine-6-phosphate (GlcNAc6P). Catalyzes the reversible conversion of alpha-D-glucosamine 6-phosphate (GlcN-6P) into beta-D-fructose 6-phosphate (Fru-6P) and ammonium ion, a regulatory reaction step in de novo uridine diphosphate-N-acetyl-alpha-D-glucosamine (UDP-GlcNAc) biosynthesis via hexosamine pathway. Deamination is coupled to aldo-keto isomerization mediating the metabolic flux from UDP-GlcNAc toward Fru-6P. At high ammonium level can drive amination and isomerization of Fru-6P toward hexosamines and UDP-GlcNAc synthesis. Has a role in fine tuning the metabolic fluctuations of cytosolic UDP-GlcNAc and their effects on hyaluronan synthesis that occur during tissue remodeling. This chain is Glucosamine-6-phosphate deaminase 2, found in Bos taurus (Bovine).